The sequence spans 503 residues: MVLVLDFGSQYTRLIARRLRELRAFSLILPGDAPLEEVLKHRPQALILSGGPRSVFDPDAPRPDPRLFSSGLPLLGICYGMQLLAQELGGRVERAGRAEYGKALLTRHEGPLFRGLEGEVQVWMSHQDAVTAPPPGWRVVAETEENPVAAIASPDGRAYGVQFHPEVAHTPKGMQILENFLELAGAKRDWTPEHVLEELLREVRERAGKDRVLLAVSGGVDSSTLALLLAKAGVDHLAVFVDHGLLRLGEREEVEGALRALGVNLLVVDAKERFLKALKGVEDPEEKRKIIGREFVAAFSQVARERGPFRFLAQGTLYPDVIESAGGHGAAKIKSHHNVGGLPEDLEFELLEPFRLLFKDEVRELALLLGLPDTLRLRHPFPGPGLAVRVLGEVTEERLEILRRADDIFTSLLREWGLYEKVAQALAVLTPVRSVGVAGDERKYGYVLALRAVTTEDFMTADWARLPLEFLDEAARRITRRVPEIGRVVYDLTSKPPATIEWE.

Positions 1–189 (MVLVLDFGSQ…FLELAGAKRD (189 aa)) constitute a Glutamine amidotransferase type-1 domain. Cys78 (nucleophile) is an active-site residue. Residues His164 and Glu166 contribute to the active site. The 189-residue stretch at 190–378 (WTPEHVLEEL…LGLPDTLRLR (189 aa)) folds into the GMPS ATP-PPase domain. An ATP-binding site is contributed by 217–223 (SGGVDSS).

In terms of assembly, homodimer.

It catalyses the reaction XMP + L-glutamine + ATP + H2O = GMP + L-glutamate + AMP + diphosphate + 2 H(+). It participates in purine metabolism; GMP biosynthesis; GMP from XMP (L-Gln route): step 1/1. In terms of biological role, catalyzes the synthesis of GMP from XMP. The sequence is that of GMP synthase [glutamine-hydrolyzing] from Thermus thermophilus (strain ATCC BAA-163 / DSM 7039 / HB27).